We begin with the raw amino-acid sequence, 198 residues long: ATP synthase subunit b (198 aa).

A helical membrane pass occupies residues 49–67; that stretch reads IWKWANFLILAGGLGYLVG.

Belongs to the ATPase B chain family. In terms of assembly, F-type ATPases have 2 components, F(1) - the catalytic core - and F(0) - the membrane proton channel. F(1) has five subunits: alpha(3), beta(3), gamma(1), delta(1), epsilon(1). F(0) has three main subunits: a(1), b(2) and c(10-14). The alpha and beta chains form an alternating ring which encloses part of the gamma chain. F(1) is attached to F(0) by a central stalk formed by the gamma and epsilon chains, while a peripheral stalk is formed by the delta and b chains.

Its subcellular location is the cell inner membrane. Its function is as follows. F(1)F(0) ATP synthase produces ATP from ADP in the presence of a proton or sodium gradient. F-type ATPases consist of two structural domains, F(1) containing the extramembraneous catalytic core and F(0) containing the membrane proton channel, linked together by a central stalk and a peripheral stalk. During catalysis, ATP synthesis in the catalytic domain of F(1) is coupled via a rotary mechanism of the central stalk subunits to proton translocation. Functionally, component of the F(0) channel, it forms part of the peripheral stalk, linking F(1) to F(0). This Solibacter usitatus (strain Ellin6076) protein is ATP synthase subunit b.